A 298-amino-acid chain; its full sequence is UDP-3-O-acyl-N-acetylglucosamine deacetylase (298 aa).

Residues H75, H232, and D236 each contribute to the Zn(2+) site. The Proton donor role is filled by H259.

It belongs to the LpxC family. Zn(2+) serves as cofactor.

It carries out the reaction a UDP-3-O-[(3R)-3-hydroxyacyl]-N-acetyl-alpha-D-glucosamine + H2O = a UDP-3-O-[(3R)-3-hydroxyacyl]-alpha-D-glucosamine + acetate. Its pathway is glycolipid biosynthesis; lipid IV(A) biosynthesis; lipid IV(A) from (3R)-3-hydroxytetradecanoyl-[acyl-carrier-protein] and UDP-N-acetyl-alpha-D-glucosamine: step 2/6. Its function is as follows. Catalyzes the hydrolysis of UDP-3-O-myristoyl-N-acetylglucosamine to form UDP-3-O-myristoylglucosamine and acetate, the committed step in lipid A biosynthesis. The polypeptide is UDP-3-O-acyl-N-acetylglucosamine deacetylase (Wolinella succinogenes (strain ATCC 29543 / DSM 1740 / CCUG 13145 / JCM 31913 / LMG 7466 / NCTC 11488 / FDC 602W) (Vibrio succinogenes)).